A 478-amino-acid polypeptide reads, in one-letter code: Trigger factor (478 aa).

Basic and acidic residues predominate over residues 154 to 167 (MAKDSRSFEPREEG). Disordered regions lie at residues 154–173 (MAKD…AQSG) and 441–478 (KEAL…KAAG). The PPIase FKBP-type domain occupies 173-258 (GDRVTIDFVG…VKAVAAPGET (86 aa)).

Belongs to the FKBP-type PPIase family. Tig subfamily.

It is found in the cytoplasm. It catalyses the reaction [protein]-peptidylproline (omega=180) = [protein]-peptidylproline (omega=0). Involved in protein export. Acts as a chaperone by maintaining the newly synthesized protein in an open conformation. Functions as a peptidyl-prolyl cis-trans isomerase. In Methylorubrum extorquens (strain CM4 / NCIMB 13688) (Methylobacterium extorquens), this protein is Trigger factor.